The primary structure comprises 429 residues: tRNA (guanine(9)-N1)-methyltransferase (429 aa).

The region spanning 131–379 (KERKEAQRRI…AVIPIRKYAP (249 aa)) is the SAM-dependent MTase TRM10-type domain. Residues 285-286 (LS), G305, 309-313 (DRNRH), C317, L331, and 344-346 (KAL) contribute to the S-adenosyl-L-methionine site. D309 (proton acceptor) is an active-site residue. Positions 383 to 429 (AKRAKTETKRNEKVEEEVECTSAEGEEDIGVIEESAEVDPEDVFSNQ) are disordered. The span at 386–395 (AKTETKRNEK) shows a compositional bias: basic and acidic residues. Positions 396–429 (VEEEVECTSAEGEEDIGVIEESAEVDPEDVFSNQ) are enriched in acidic residues.

It belongs to the class IV-like SAM-binding methyltransferase superfamily. TRM10 family. In terms of assembly, monomer.

Its subcellular location is the cytoplasm. The protein resides in the nucleus. It carries out the reaction guanosine(9) in tRNA + S-adenosyl-L-methionine = N(1)-methylguanosine(9) in tRNA + S-adenosyl-L-homocysteine + H(+). S-adenosyl-L-methionine-dependent guanine N(1)-methyltransferase that catalyzes the formation of N(1)-methylguanine at position 9 (m1G9) in cytoplasmic tRNA. The polypeptide is tRNA (guanine(9)-N1)-methyltransferase (Cryptococcus neoformans var. neoformans serotype D (strain B-3501A) (Filobasidiella neoformans)).